Here is a 62-residue protein sequence, read N- to C-terminus: Photosystem II reaction center protein Z (62 aa).

2 helical membrane passes run 8–28 (AIFA…VVFA) and 41–61 (FSGT…NSLI).

This sequence belongs to the PsbZ family. As to quaternary structure, PSII is composed of 1 copy each of membrane proteins PsbA, PsbB, PsbC, PsbD, PsbE, PsbF, PsbH, PsbI, PsbJ, PsbK, PsbL, PsbM, PsbT, PsbY, PsbZ, Psb30/Ycf12, at least 3 peripheral proteins of the oxygen-evolving complex and a large number of cofactors. It forms dimeric complexes.

The protein localises to the plastid. The protein resides in the chloroplast thylakoid membrane. Its function is as follows. May control the interaction of photosystem II (PSII) cores with the light-harvesting antenna, regulates electron flow through the 2 photosystem reaction centers. PSII is a light-driven water plastoquinone oxidoreductase, using light energy to abstract electrons from H(2)O, generating a proton gradient subsequently used for ATP formation. This Acorus gramineus (Dwarf sweet flag) protein is Photosystem II reaction center protein Z.